The sequence spans 711 residues: MAEPTATREQAQQRMAQLRGEISEHDYHYYVLDRPTISDAEYDALFRELQRLEAAYPDLVSSDSPTQRVAGTAQEGFEAVVHDTPMLSLDNAFEADDLVDFDRRIRDRLGVASVVYTGEPKLDGISLSLTYQDGELVRAGTRGDGHTGEDVTANVRTLRSVPLRLRGDGYPGRLEVRGEVVIRKEDFERLNQARLDAGERPFANPRNAAAGSLRQLDPRITARRPLTLFTFGVGDPLALGVESHWQVLECLAGWGFRTTAPLEHLEGVSACQAYRDRLIEERDALPFEIDGAVFKVDDLAVREQLGFTARAPRWALAFKLPAREATTVVEAIVPSVGRTGKITPLARLQPVEVSGVTVARASLHNADELARMDVREGDTVMVRRAGDVIPQITDVVLAKRPEGAQPWRFEERVQACPECGSAVQRIEGEAAHRCVGGLYCPAQREGAILHFASRRALDIDGLGEKIVEQLVAKGLVVDLADLFRLGHAQLAGLERMGDKSADNLLAALDRARSTTLARFLYALGIPHVGEVTARRLAEAAYGLMVAVPRGDRAALRAAAGLDAQTAITSEALLRVMAAPADDLEAIEDVGPVVARAIAGFFAEPHNRQVVDHLCAAGVHWPEPDPPEQAESVSSLAGRAFVVTGTLETMTRDEAKAAIEACGGRVTGSVSRKTDYLVAGADAGSKLNKARELGVEVVNESGLRELLAGAGA.

NAD(+) is bound by residues 39-43 (DAEYD), 88-89 (SL), and E119. K121 acts as the N6-AMP-lysine intermediate in catalysis. The NAD(+) site is built by R142, E179, K295, and K319. C416, C419, C434, and C440 together coordinate Zn(2+). Positions 630–711 (ESVSSLAGRA…LRELLAGAGA (82 aa)) constitute a BRCT domain.

The protein belongs to the NAD-dependent DNA ligase family. LigA subfamily. It depends on Mg(2+) as a cofactor. The cofactor is Mn(2+).

It catalyses the reaction NAD(+) + (deoxyribonucleotide)n-3'-hydroxyl + 5'-phospho-(deoxyribonucleotide)m = (deoxyribonucleotide)n+m + AMP + beta-nicotinamide D-nucleotide.. In terms of biological role, DNA ligase that catalyzes the formation of phosphodiester linkages between 5'-phosphoryl and 3'-hydroxyl groups in double-stranded DNA using NAD as a coenzyme and as the energy source for the reaction. It is essential for DNA replication and repair of damaged DNA. This Halorhodospira halophila (strain DSM 244 / SL1) (Ectothiorhodospira halophila (strain DSM 244 / SL1)) protein is DNA ligase.